Reading from the N-terminus, the 40-residue chain is U4-ctenitoxin-Co1c (40 aa).

Intrachain disulfides connect Cys-3/Cys-20, Cys-10/Cys-26, Cys-19/Cys-40, and Cys-28/Cys-38.

Expressed by the venom gland.

It localises to the secreted. Functionally, not toxic to mice by intracerebroventricular injection. The chain is U4-ctenitoxin-Co1c from Ctenus ornatus (Brazilian spider).